The primary structure comprises 414 residues: Gamma-glutamyl phosphate reductase (414 aa).

This sequence belongs to the gamma-glutamyl phosphate reductase family.

It is found in the cytoplasm. The enzyme catalyses L-glutamate 5-semialdehyde + phosphate + NADP(+) = L-glutamyl 5-phosphate + NADPH + H(+). It functions in the pathway amino-acid biosynthesis; L-proline biosynthesis; L-glutamate 5-semialdehyde from L-glutamate: step 2/2. Catalyzes the NADPH-dependent reduction of L-glutamate 5-phosphate into L-glutamate 5-semialdehyde and phosphate. The product spontaneously undergoes cyclization to form 1-pyrroline-5-carboxylate. This Xanthomonas campestris pv. campestris (strain B100) protein is Gamma-glutamyl phosphate reductase.